The following is a 40-amino-acid chain: Photosystem II reaction center protein X (40 aa).

Residues 10-30 (WSLVWGTVIVVIPVTVGLVFI) traverse the membrane as a helical segment.

It belongs to the PsbX family. Type 1 subfamily. In terms of assembly, PSII is composed of 1 copy each of membrane proteins PsbA, PsbB, PsbC, PsbD, PsbE, PsbF, PsbH, PsbI, PsbJ, PsbK, PsbL, PsbM, PsbT, PsbX, PsbY, PsbZ, Psb30/Ycf12, peripheral proteins PsbO, CyanoQ (PsbQ), PsbU, PsbV and a large number of cofactors. It forms dimeric complexes.

Its subcellular location is the cellular thylakoid membrane. Involved in the binding and/or turnover of quinones at the Q(B) site of photosystem II (PSII). PSII is a light-driven water plastoquinone oxidoreductase, using light energy to abstract electrons from H(2)O, generating a proton gradient subsequently used for ATP formation. The polypeptide is Photosystem II reaction center protein X (Crocosphaera subtropica (strain ATCC 51142 / BH68) (Cyanothece sp. (strain ATCC 51142))).